Here is a 412-residue protein sequence, read N- to C-terminus: Double C2-like domain-containing protein beta (412 aa).

Residues 1-36 form a negatively regulates targeting to plasma membrane region; it reads MTLRRRGEKATISIQEHMAIDVCPGPIRPIKQISDY. The tract at residues 1 to 90 is mediates interaction with DYNLT1; the sequence is MTLRRRGEKA…EDVDQLFGAY (90 aa). Positions 38-123 are disordered; sequence PRFPRGLPPT…PDVDGYESDD (86 aa). Positions 43–58 are enriched in pro residues; it reads GLPPTAAPRAPAPPDA. Positions 59–74 are enriched in low complexity; that stretch reads PARSPAASASPRSPSD. Pro residues predominate over residues 95-108; sequence GPSPGPSPARPPAK. Residues 112 to 123 are compositionally biased toward acidic residues; that stretch reads DEPDVDGYESDD. 2 consecutive C2 domains span residues 126 to 250 and 266 to 399; these read ALGT…SICL and ERGR…ERWH. Ca(2+) contacts are provided by D157, D163, D218, D220, D297, D303, D357, D359, and D365. Residues 257–375 form a mediates interaction with STXBP3 region; the sequence is DKAEDKSLEE…FIGGVVLGIN (119 aa). Phosphoserine is present on S411.

Interacts with cytoplasmic dynein light chain DYNLT1. May interact with UNC13A; the interaction mediates targeting to the plasma membrane. Probably interacts with the SNARE (soluble N-ethylmaleimide-sensitive factor attached protein receptor) complex composed of SNAP25, STX1A and VAMP2; the interaction is calcium-dependent and competitive with SYT1. Interacts with STX4; the interaction is calcium-dependent, increased by insulin and glucose, and mediates vesicle fusion with plasma membrane in pancreatic cells and adipocytes. Interacts with STXBP3; the interaction is direct, occurs at the cell membrane and regulates glucose-stimulated insulin secretion. Ca(2+) serves as cofactor. As to expression, widely expressed. Expressed in pancreatic islet cells (at protein level).

The protein resides in the cytoplasm. It is found in the cytoplasmic granule. Its subcellular location is the cell membrane. In terms of biological role, calcium sensor which positively regulates SNARE-dependent fusion of vesicles with membranes. Binds phospholipids in a calcium-dependent manner and may act at the priming stage of fusion by modifying membrane curvature to stimulate fusion. Involved in calcium-triggered exocytosis in chromaffin cells and calcium-dependent spontaneous release of neurotransmitter in absence of action potentials in neuronal cells. Involved both in glucose-stimulated insulin secretion in pancreatic cells and insulin-dependent GLUT4 transport to the plasma membrane in adipocytes. This chain is Double C2-like domain-containing protein beta (Doc2b), found in Mus musculus (Mouse).